A 96-amino-acid chain; its full sequence is Prokineticin Bo8 (96 aa).

The N-terminal stretch at 1–19 (MKCFAQIVVLLLVIAFSHG) is a signal peptide. 5 disulfides stabilise this stretch: C26–C38, C32–C50, C37–C78, C60–C86, and C80–C95.

Expressed by the skin glands.

The protein resides in the secreted. Potent agonist for both PKR1/PROKR1 and PKR2/PROKR2, and inducer of a potent and long-lasting hyperalgesia. Also potentiates capsaicin-induced TRPV1 current, when tested on DRG neurons. At subnanomolar concentrations, this protein both induces potent chemotaxis of macrophages and stimulates LPS-induced production of the pro-inflammatory cytokines IL-1 and IL-12. In vivo, potently stimulates the contraction of the guinea-pig gastrointestinal (GI) smooth muscle (nanomolar concentration). In Bombina orientalis (Oriental fire-bellied toad), this protein is Prokineticin Bo8.